We begin with the raw amino-acid sequence, 163 residues long: Large ribosomal subunit protein uL10 (163 aa).

The protein belongs to the universal ribosomal protein uL10 family. As to quaternary structure, part of the ribosomal stalk of the 50S ribosomal subunit. The N-terminus interacts with L11 and the large rRNA to form the base of the stalk. The C-terminus forms an elongated spine to which L12 dimers bind in a sequential fashion forming a multimeric L10(L12)X complex.

In terms of biological role, forms part of the ribosomal stalk, playing a central role in the interaction of the ribosome with GTP-bound translation factors. This Histophilus somni (strain 2336) (Haemophilus somnus) protein is Large ribosomal subunit protein uL10.